Here is a 196-residue protein sequence, read N- to C-terminus: Probable malonic semialdehyde reductase RutE (196 aa).

This sequence belongs to the nitroreductase family. HadB/RutE subfamily. It depends on FMN as a cofactor.

It catalyses the reaction 3-hydroxypropanoate + NADP(+) = 3-oxopropanoate + NADPH + H(+). Functionally, may reduce toxic product malonic semialdehyde to 3-hydroxypropionic acid, which is excreted. This chain is Probable malonic semialdehyde reductase RutE, found in Klebsiella pneumoniae subsp. pneumoniae (strain ATCC 700721 / MGH 78578).